A 496-amino-acid polypeptide reads, in one-letter code: ATP synthase subunit beta, chloroplastic (496 aa).

170–177 (GGAGVGKT) lines the ATP pocket.

It belongs to the ATPase alpha/beta chains family. As to quaternary structure, F-type ATPases have 2 components, CF(1) - the catalytic core - and CF(0) - the membrane proton channel. CF(1) has five subunits: alpha(3), beta(3), gamma(1), delta(1), epsilon(1). CF(0) has four main subunits: a(1), b(1), b'(1) and c(9-12).

The protein resides in the plastid. The protein localises to the chloroplast thylakoid membrane. The catalysed reaction is ATP + H2O + 4 H(+)(in) = ADP + phosphate + 5 H(+)(out). Its function is as follows. Produces ATP from ADP in the presence of a proton gradient across the membrane. The catalytic sites are hosted primarily by the beta subunits. This Dioscorea elephantipes (Elephant's foot yam) protein is ATP synthase subunit beta, chloroplastic.